We begin with the raw amino-acid sequence, 983 residues long: UPF0182 protein MLBr00644 (983 aa).

7 helical membrane-spanning segments follow: residues 19-39 (LIMVALGVIVLLLAGPRLVDA), 63-83 (VVVFLVAGLVVGGIVFAGLAV), 113-133 (LIGVGIPAAIGLLAGIIAQSY), 175-195 (FVAVFLAFVVNLLAHYIFGGI), 210-230 (LQLVSLVGVLVLLKAVAYWLD), 259-279 (KLILIAIALICAAAVFSAITL), and 287-307 (IGLVLLMLSSLIVGTGWPLIV).

It belongs to the UPF0182 family.

It is found in the cell membrane. The polypeptide is UPF0182 protein MLBr00644 (Mycobacterium leprae (strain Br4923)).